Reading from the N-terminus, the 373-residue chain is MPLQPFKTSNLLTMGVELELQLISLSNFDLTAASPDILELLGRSSFPGSFTPEITESMLEIATDVHEEYEQLLKQLFHIRDTLVAVGDRLNIGICGGGTHPFQMWSDQRIFNKTRFIEVSELYGYLTKQFTIFGQHIHIGCEDGNQALFLLHSLNRYIPHFIALSASSPFVQSKDTLYNSARLNSVFAFPLSGRAPFVLNWDEFSLGYFEKMEHTGIVKSMKDFYWDLRPKPEFGTIEMRVCDSPLTVERAAALACYMQALCSYLLENKEPLPHEDDYLVYNYNRFQACRFGLDGTLVHPKTYEQILLREDILTTLRRLKPYANQLNSTMALEHIYEITHKGSDASFLREKYAEHRTLESVVNESLKQFRSSK.

Belongs to the glutamate--cysteine ligase type 2 family. YbdK subfamily.

The catalysed reaction is L-cysteine + L-glutamate + ATP = gamma-L-glutamyl-L-cysteine + ADP + phosphate + H(+). In terms of biological role, ATP-dependent carboxylate-amine ligase which exhibits weak glutamate--cysteine ligase activity. In Legionella pneumophila (strain Lens), this protein is Putative glutamate--cysteine ligase 2-1.